The following is a 47-amino-acid chain: Large ribosomal subunit protein bL33A (47 aa).

The protein belongs to the bacterial ribosomal protein bL33 family.

In Staphylococcus aureus (strain JH1), this protein is Large ribosomal subunit protein bL33A.